The sequence spans 356 residues: Histidinol-phosphate aminotransferase (356 aa).

Lysine 217 carries the post-translational modification N6-(pyridoxal phosphate)lysine.

The protein belongs to the class-II pyridoxal-phosphate-dependent aminotransferase family. Histidinol-phosphate aminotransferase subfamily. As to quaternary structure, homodimer. Pyridoxal 5'-phosphate serves as cofactor.

It carries out the reaction L-histidinol phosphate + 2-oxoglutarate = 3-(imidazol-4-yl)-2-oxopropyl phosphate + L-glutamate. It participates in amino-acid biosynthesis; L-histidine biosynthesis; L-histidine from 5-phospho-alpha-D-ribose 1-diphosphate: step 7/9. The chain is Histidinol-phosphate aminotransferase from Chromobacterium violaceum (strain ATCC 12472 / DSM 30191 / JCM 1249 / CCUG 213 / NBRC 12614 / NCIMB 9131 / NCTC 9757 / MK).